The sequence spans 327 residues: T-cell surface glycoprotein CD1a (327 aa).

Residues 1 to 16 (MLFLLLPLLAVLPGDG) form the signal peptide. Residues 17-300 (NADGLKEPLS…VLYWEHHSSV (284 aa)) lie on the Extracellular side of the membrane. N-linked (GlcNAc...) asparagine glycans are attached at residues Asn37, Asn60, and Asn74. Residue 90–94 (RTIRS) participates in a D-galactosylceramide binding. 2 cysteine pairs are disulfide-bonded: Cys119-Cys183 and Cys223-Cys278. Asn145 carries N-linked (GlcNAc...) asparagine glycosylation. Residues Glu171 and Thr175 each contribute to the a D-galactosylceramide site. The Ig-like domain maps to 184 to 291 (PRFILGLLDA…HSSLEGQDIV (108 aa)). A helical membrane pass occupies residues 301–321 (GFIILAVIVPLLLLIGLALWF). Residues 322 to 327 (RKRCFC) are Cytoplasmic-facing.

In terms of assembly, heterodimer with B2M (beta-2-microglobulin). Interacts with CD74. In terms of tissue distribution, expressed on cortical thymocytes, epidermal Langerhans cells, dendritic cells, on certain T-cell leukemias, and in various other tissues.

Its subcellular location is the cell membrane. The protein localises to the membrane raft. It is found in the endosome membrane. Its function is as follows. Antigen-presenting protein that binds self and non-self lipid and glycolipid antigens and presents them to T-cell receptors on natural killer T-cells. This Homo sapiens (Human) protein is T-cell surface glycoprotein CD1a (CD1A).